The sequence spans 547 residues: MSSVFRKILVTCALPYANGSIHIGHMLEHIQADIWVRYHRMRGHEVWFVSADDAHGTAIMLKAQDLEISPNKLIKNIRIEHQIDFSNFKISHDNYYSTHSLENLYLSRKIFTCLNEKGLIKEKKIFQLYDTVKKIFLPDRFIKGTCPICKSKNQYGDNCEICSATYEPTDLINPISVISGKKPILKNTKHLYFDLPSFTNMLKKWIHSGVLEESVIKKTEEWFKVGLKSWAISRDAPYFGFKIPNYPNKYFYVWLDAPIGYISAFKNLCFKSKKLNFNELWNQNSNYELYHFIGKDIIYFHTLFWPAILEAVSFRQPSGIFVHGHLTMNGLKLSKSRGALIKASDWIQYFDSDSLRYYYASKLSNKTHDIEINLEDFIQKINSDIVNKLVNLAARNASFINKYFNGYLSDKLSNIKLYKYFVNTSSSIEDFFENREFSFIVKESMRLLDVANQYINEKKPWKIKRTEENIRELQNICTMGINLFRIIMIFLKPIVPDLAIKTESFLISKLTWDGIKKPLLSHQINKFFPLYKRIDVEKMFEFMNICR.

The 'HIGH' region signature appears at 15-25 (PYANGSIHIGH). Residues Cys-146, Cys-149, Cys-159, and Cys-162 each contribute to the Zn(2+) site. Positions 332–336 (KLSKS) match the 'KMSKS' region motif. Lys-335 contributes to the ATP binding site.

It belongs to the class-I aminoacyl-tRNA synthetase family. MetG type 1 subfamily. In terms of assembly, monomer. Requires Zn(2+) as cofactor.

The protein localises to the cytoplasm. The enzyme catalyses tRNA(Met) + L-methionine + ATP = L-methionyl-tRNA(Met) + AMP + diphosphate. Is required not only for elongation of protein synthesis but also for the initiation of all mRNA translation through initiator tRNA(fMet) aminoacylation. The chain is Methionine--tRNA ligase (metG) from Buchnera aphidicola subsp. Acyrthosiphon pisum (strain APS) (Acyrthosiphon pisum symbiotic bacterium).